A 229-amino-acid polypeptide reads, in one-letter code: NAD(P)H-hydrate epimerase (229 aa).

In terms of domain architecture, YjeF N-terminal spans 10 to 217 (AINVDQELFN…ALQRKYDLNL (208 aa)). (6S)-NADPHX is bound at residue 60–64 (NNGGD). Residues Asn-61 and Asp-125 each coordinate K(+). Residues 129-135 (GFSFKPP) and Asp-158 contribute to the (6S)-NADPHX site. Residue Ser-161 participates in K(+) binding.

The protein belongs to the NnrE/AIBP family. The cofactor is K(+).

The catalysed reaction is (6R)-NADHX = (6S)-NADHX. It carries out the reaction (6R)-NADPHX = (6S)-NADPHX. In terms of biological role, catalyzes the epimerization of the S- and R-forms of NAD(P)HX, a damaged form of NAD(P)H that is a result of enzymatic or heat-dependent hydration. This is a prerequisite for the S-specific NAD(P)H-hydrate dehydratase to allow the repair of both epimers of NAD(P)HX. The chain is NAD(P)H-hydrate epimerase from Drosophila ananassae (Fruit fly).